The following is a 606-amino-acid chain: Retrovirus-related Pol polyprotein from type-1 retrotransposable element R2 (606 aa).

The 208-residue stretch at 1–208 (GTLANIIMLE…NTFKYLGLTF (208 aa)) folds into the Reverse transcriptase domain. Residues 331-606 (IFNIEGPARS…PPDPPRPVPP (276 aa)) are nucleic acid-binding endonuclease.

The enzyme catalyses DNA(n) + a 2'-deoxyribonucleoside 5'-triphosphate = DNA(n+1) + diphosphate. This is Retrovirus-related Pol polyprotein from type-1 retrotransposable element R2 from Popillia japonica (Japanese beetle).